The following is a 40-amino-acid chain: Photosystem II reaction center protein J (40 aa).

The helical transmembrane segment at 8–28 (IPLWLIGTIAGILVIGLVGIF) threads the bilayer.

It belongs to the PsbJ family. As to quaternary structure, PSII is composed of 1 copy each of membrane proteins PsbA, PsbB, PsbC, PsbD, PsbE, PsbF, PsbH, PsbI, PsbJ, PsbK, PsbL, PsbM, PsbT, PsbX, PsbY, PsbZ, Psb30/Ycf12, at least 3 peripheral proteins of the oxygen-evolving complex and a large number of cofactors. It forms dimeric complexes.

Its subcellular location is the plastid. The protein localises to the chloroplast thylakoid membrane. One of the components of the core complex of photosystem II (PSII). PSII is a light-driven water:plastoquinone oxidoreductase that uses light energy to abstract electrons from H(2)O, generating O(2) and a proton gradient subsequently used for ATP formation. It consists of a core antenna complex that captures photons, and an electron transfer chain that converts photonic excitation into a charge separation. The chain is Photosystem II reaction center protein J from Anthoceros angustus (Hornwort).